The sequence spans 1385 residues: DNA-directed RNA polymerase subunit beta' (1385 aa).

Zn(2+) contacts are provided by cysteine 72, cysteine 74, cysteine 87, and cysteine 90. Mg(2+) is bound by residues aspartate 463, aspartate 465, and aspartate 467. Zn(2+) contacts are provided by cysteine 813, cysteine 887, cysteine 894, and cysteine 897.

The protein belongs to the RNA polymerase beta' chain family. The RNAP catalytic core consists of 2 alpha, 1 beta, 1 beta' and 1 omega subunit. When a sigma factor is associated with the core the holoenzyme is formed, which can initiate transcription. Requires Mg(2+) as cofactor. It depends on Zn(2+) as a cofactor.

It carries out the reaction RNA(n) + a ribonucleoside 5'-triphosphate = RNA(n+1) + diphosphate. Its function is as follows. DNA-dependent RNA polymerase catalyzes the transcription of DNA into RNA using the four ribonucleoside triphosphates as substrates. In Trichlorobacter lovleyi (strain ATCC BAA-1151 / DSM 17278 / SZ) (Geobacter lovleyi), this protein is DNA-directed RNA polymerase subunit beta'.